The sequence spans 1102 residues: Ubiquitin carboxyl-terminal hydrolase 7 (1102 aa).

Low complexity predominate over residues 1–10; the sequence is MNHQQQQQQQ. A disordered region spans residues 1-38; it reads MNHQQQQQQQKAGEQQLSEPEDMEMEAGDTDDPPRITQ. An interaction with TSPYL5 region spans residues 1–208; sequence MNHQQQQQQQ…APHGVAWDSK (208 aa). S18 is modified (phosphoserine). A compositionally biased stretch (acidic residues) spans 19 to 31; sequence EPEDMEMEAGDTD. S49 is subject to Phosphoserine. Residues 53–208 are interaction with p53/TP53, MDM2 and EBNA1; that stretch reads NTAEEDMEDD…APHGVAWDSK (156 aa). Positions 68-195 constitute an MATH domain; the sequence is EATFQFTVER…DDKVTFEVFV (128 aa). A necessary for nuclear localization region spans residues 70 to 205; it reads TFQFTVERFS…QADAPHGVAW (136 aa). One can recognise a USP domain in the interval 214–521; sequence VGLKNQGATC…NAYMLVYIRE (308 aa). Catalysis depends on C223, which acts as the Nucleophile. H464 serves as the catalytic Proton acceptor. The interval 622 to 801 is interaction with ICP0/VMW110; the sequence is LWPMQARSNG…HRVDVIFCDK (180 aa). The residue at position 869 (K869) is an N6-acetyllysine; alternate. K869 participates in a covalent cross-link: Glycyl lysine isopeptide (Lys-Gly) (interchain with G-Cter in SUMO2); alternate. K869 is covalently cross-linked (Glycyl lysine isopeptide (Lys-Gly) (interchain with G-Cter in ubiquitin); alternate). K882 is covalently cross-linked (Glycyl lysine isopeptide (Lys-Gly) (interchain with G-Cter in SUMO2)). S963 is modified (phosphoserine). K1084 and K1096 each carry N6-acetyllysine.

It belongs to the peptidase C19 family. In terms of assembly, monomer. Homodimer. Part of a complex with DAXX, MDM2, RASSF1 and USP7. Part of a complex with DAXX, MDM2 and USP7. Interacts with MDM2; the interaction is independent of p53/TP53. Interacts with DAXX; the interaction is direct and independent of MDM2 and p53/TP53. Component of a complex composed of KMT2E/MLL5 (isoform 3), OGT (isoform 1) and USP7; the complex stabilizes KMT2E/MLL5, preventing KMT2E/MLL5 ubiquitination and proteasomal-mediated degradation. Interacts (via MATH domain) with KMT2E/MLL5 isoform 3. Interacts with OGT isoform 1. Interacts with FOXO4; the interaction is enhanced in presence of hydrogen peroxide and occurs independently of p53/TP53. Interacts with p53/TP53; the interaction is enhanced in response to DNA damage. Interacts with TSPYL5; this impairs interaction with p53/TP53. Interacts with PTEN; the interaction is direct. Interacts with ATXN1 and the strength of interaction is influenced by the length of the poly-Gln region in ATXN1. A weaker interaction seen with mutants having longer poly-Gln regions. Interacts with KIAA1530/UVSSA. Interacts with ABRAXAS2; the interaction is direct. Identified in a complex with TP53/p53 and ABRAXAS2. Interacts with MEX3C and antagonizes its ability to degrade mRNA. Interacts with DNMT1 and UHRF1. Interacts with FOXP3. Interacts (via MATH domain) with RNF220. Associated component of the Polycomb group (PcG) multiprotein PRC1-like complex. Interacts with EPOP. Interacts with OTUD4 and USP9X; the interaction is direct. Interacts with CRY2. Interacts with REST. Interacts with ERCC6. Part of a complex consisting of USP7, MAGEL2 and TRIM27; directly interacts with MAGEL2; directly interacts with TRIM27. As to quaternary structure, (Microbial infection) Isoform 1 and isoform 2 interact with herpesvirus 1 trans-acting transcriptional protein ICP0/VMW110. Binding to ICP0/VMW110 may modulate the substrate specificity or activity of USP7 to stabilize viral proteins. (Microbial infection) Interacts with Epstein-Barr virus EBNA1; the interaction is independent and simultaneous to EBNA1 interaction with USP7 as well as necessary for PML nuclear bodies disruption by EBNA1. EBNA1, USP7 and CSNK2B form a ternary complex. EBNA1 shows a 10-fold higher affinity than p53/TP53 and can compete with it for USP7 binding. In terms of assembly, (Microbial infection) Interacts with human cytomegalovirus proteins UL35 and UL35A; these interactions inhibit the ability of USP7 to form nuclear bodies. As to quaternary structure, (Microbial infection) Interacts with herpes virus 8/HHV-8 proteins vIRF-1 and vIRF-3; these interactions may disrupt TP53 signaling pathway during viral infection by decreasing the availability of USP7 for deubiquitinating and stabilizing TP53. (Microbial infection) Interacts with herpes virus 8/HHV-8 protein vIRF-2; this interaction modulates antiviral signaling via disruption of USP7 interactions with innate immune signaling proteins TRAF3 and TRAF6 thus affecting their ubiquitination. In terms of processing, isoform 1: Phosphorylated. Isoform 1 is phosphorylated at positions Ser-18 and Ser-963. Isoform 2: Not phosphorylated. Post-translationally, isoform 1: Polyneddylated. Isoform 2: Not Polyneddylated. Isoform 1 and isoform 2: Not sumoylated. In terms of processing, isoform 1 and isoform 2: Polyubiquitinated by herpesvirus 1 trans-acting transcriptional protein ICP0/VMW110; leading to its subsequent proteasomal degradation. Isoform 1: Ubiquitinated at Lys-869. Expressed in neural progenitor cells (at protein level). Widely expressed. Overexpressed in prostate cancer.

The protein resides in the nucleus. Its subcellular location is the cytoplasm. The protein localises to the PML body. It is found in the chromosome. The enzyme catalyses Thiol-dependent hydrolysis of ester, thioester, amide, peptide and isopeptide bonds formed by the C-terminal Gly of ubiquitin (a 76-residue protein attached to proteins as an intracellular targeting signal).. Its activity is regulated as follows. Inhibited by N-ethyl-maleimide (NEM) and divalent cations. Tolerates high concentrations of NaCl but is inhibited at concentrations of 195 mM and higher. Hydrolase that deubiquitinates target proteins such as ARMC5, FOXO4, DEPTOR, KAT5, p53/TP53, MDM2, ERCC6, DNMT1, UHRF1, PTEN, KMT2E/MLL5 and DAXX. Together with DAXX, prevents MDM2 self-ubiquitination and enhances the E3 ligase activity of MDM2 towards p53/TP53, thereby promoting p53/TP53 ubiquitination and proteasomal degradation. Deubiquitinates p53/TP53, preventing degradation of p53/TP53, and enhances p53/TP53-dependent transcription regulation, cell growth repression and apoptosis. Deubiquitinates p53/TP53 and MDM2 and strongly stabilizes p53/TP53 even in the presence of excess MDM2, and also induces p53/TP53-dependent cell growth repression and apoptosis. Deubiquitination of FOXO4 in presence of hydrogen peroxide is not dependent on p53/TP53 and inhibits FOXO4-induced transcriptional activity. In association with DAXX, is involved in the deubiquitination and translocation of PTEN from the nucleus to the cytoplasm, both processes that are counteracted by PML. Deubiquitinates KMT2E/MLL5 preventing KMT2E/MLL5 proteasomal-mediated degradation. Involved in cell proliferation during early embryonic development. Involved in transcription-coupled nucleotide excision repair (TC-NER) in response to UV damage: recruited to DNA damage sites following interaction with KIAA1530/UVSSA and promotes deubiquitination of ERCC6, preventing UV-induced degradation of ERCC6. Involved in maintenance of DNA methylation via its interaction with UHRF1 and DNMT1: acts by mediating deubiquitination of UHRF1 and DNMT1, preventing their degradation and promoting DNA methylation by DNMT1. Deubiquitinates alkylation repair enzyme ALKBH3. OTUD4 recruits USP7 and USP9X to stabilize ALKBH3, thereby promoting the repair of alkylated DNA lesions. Acts as a chromatin regulator via its association with the Polycomb group (PcG) multiprotein PRC1-like complex; may act by deubiquitinating components of the PRC1-like complex. Able to mediate deubiquitination of histone H2B; it is however unsure whether this activity takes place in vivo. Exhibits a preference towards 'Lys-48'-linked ubiquitin chains. Increases regulatory T-cells (Treg) suppressive capacity by deubiquitinating and stabilizing the transcription factor FOXP3 which is crucial for Treg cell function. Plays a role in the maintenance of the circadian clock periodicity via deubiquitination and stabilization of the CRY1 and CRY2 proteins. Deubiquitinates REST, thereby stabilizing REST and promoting the maintenance of neural progenitor cells. Deubiquitinates SIRT7, inhibiting SIRT7 histone deacetylase activity and regulating gluconeogenesis. Involved in the regulation of WASH-dependent actin polymerization at the surface of endosomes and the regulation of endosomal protein recycling. It maintains optimal WASH complex activity and precise F-actin levels via deubiquitination of TRIM27 and WASHC1. Mediates the deubiquitination of phosphorylated DEPTOR, promoting its stability and leading to decreased mTORC1 signaling. In terms of biological role, (Microbial infection) Contributes to the overall stabilization and trans-activation capability of the herpesvirus 1 trans-acting transcriptional protein ICP0/VMW110 during HSV-1 infection. Functionally, (Microbial infection) Upon infection with Epstein-Barr virus, the interaction with viral EBNA1 increases the association of USP7 with PML proteins, which is required for the polyubiquitylation and degradation of PML. The chain is Ubiquitin carboxyl-terminal hydrolase 7 from Homo sapiens (Human).